Reading from the N-terminus, the 88-residue chain is Auxin-responsive protein SAUR21 (88 aa).

The protein belongs to the ARG7 family.

The protein resides in the cell membrane. Functions as a positive effector of cell expansion through modulation of auxin transport. This chain is Auxin-responsive protein SAUR21, found in Arabidopsis thaliana (Mouse-ear cress).